Here is a 476-residue protein sequence, read N- to C-terminus: mRNA-capping enzyme subunit beta (476 aa).

Positions M1–R133 are disordered. Composition is skewed to basic and acidic residues over residues L51–N67 and H105–K114. Basic residues predominate over residues S123–R132.

The protein belongs to the fungal TPase family. In terms of assembly, heterodimer. The mRNA-capping enzyme is composed of two separate chains alpha and beta, respectively a mRNA guanylyltransferase and an mRNA 5'-triphosphate monophosphatase. It depends on Mg(2+) as a cofactor.

It is found in the nucleus. The enzyme catalyses a 5'-end triphospho-ribonucleoside in mRNA + H2O = a 5'-end diphospho-ribonucleoside in mRNA + phosphate + H(+). First step of mRNA capping. Converts the 5'-triphosphate end of a nascent mRNA chain into a diphosphate end. The protein is mRNA-capping enzyme subunit beta (CET1) of Debaryomyces hansenii (strain ATCC 36239 / CBS 767 / BCRC 21394 / JCM 1990 / NBRC 0083 / IGC 2968) (Yeast).